Consider the following 343-residue polypeptide: Aspartate beta-hydroxylase domain-containing protein 2 (343 aa).

Residues 1–31 (MWLEWLVAWSWSLDGLRDCIATGIQSVRDCD) lie on the Cytoplasmic side of the membrane. The chain crosses the membrane as a helical span at residues 32-52 (GTAVITVACLLVLFVWYCYHV). The Lumenal segment spans residues 53–343 (GREQPRPHVS…ALDFIFAPGR (291 aa)). N-linked (GlcNAc...) asparagine glycosylation is found at asparagine 77 and asparagine 185. Tryptophan 202 and serine 246 together coordinate 2-oxoglutarate. Fe cation is bound at residue histidine 257. Position 266 to 268 (266 to 268 (RCH)) interacts with 2-oxoglutarate. Histidine 302 contacts Fe cation. Arginine 315 provides a ligand contact to 2-oxoglutarate.

Belongs to the aspartyl/asparaginyl beta-hydroxylase family. The cofactor is Fe cation.

The protein localises to the membrane. Functionally, may function as 2-oxoglutarate-dependent dioxygenase. This is Aspartate beta-hydroxylase domain-containing protein 2 (Asphd2) from Rattus norvegicus (Rat).